The sequence spans 606 residues: Albumin A (606 aa).

The signal sequence occupies residues 1–18; that stretch reads MKWITLICLLISSTLIES. Residues 19–24 constitute a propeptide that is removed on maturation; that stretch reads RIIFKR. Albumin domains follow at residues 22-211, 212-401, and 402-599; these read FKRD…ELMK, HSHS…RFMN, and EAKE…VLIE. His-30 contacts Cu cation. Cystine bridges form between Cys-80–Cys-89, Cys-102–Cys-118, Cys-117–Cys-128, Cys-148–Cys-193, Cys-192–Cys-201, Cys-224–Cys-270, Cys-269–Cys-277, Cys-289–Cys-303, Cys-302–Cys-313, Cys-340–Cys-383, Cys-382–Cys-391, Cys-414–Cys-460, Cys-459–Cys-470, Cys-483–Cys-499, Cys-498–Cys-509, Cys-536–Cys-581, and Cys-580–Cys-589.

Belongs to the ALB/AFP/VDB family. Plasma.

It is found in the secreted. Binds water, Ca(2+), Na(+), K(+), fatty acids, hormones, bilirubin and drugs. Its main function is the regulation of the colloidal osmotic pressure of blood. In Xenopus laevis (African clawed frog), this protein is Albumin A (alb-a).